The following is a 239-amino-acid chain: tRNA (guanine-N(7)-)-methyltransferase (239 aa).

S-adenosyl-L-methionine-binding residues include glutamate 69, glutamate 94, aspartate 121, and aspartate 144. Aspartate 144 is an active-site residue. Lysine 148 contacts substrate. The segment at 150 to 155 is interaction with RNA; sequence RHNKRR. Substrate-binding positions include aspartate 180 and 217–220; that span reads TKFE.

This sequence belongs to the class I-like SAM-binding methyltransferase superfamily. TrmB family. In terms of assembly, monomer.

The catalysed reaction is guanosine(46) in tRNA + S-adenosyl-L-methionine = N(7)-methylguanosine(46) in tRNA + S-adenosyl-L-homocysteine. It functions in the pathway tRNA modification; N(7)-methylguanine-tRNA biosynthesis. Its function is as follows. Catalyzes the formation of N(7)-methylguanine at position 46 (m7G46) in tRNA. The protein is tRNA (guanine-N(7)-)-methyltransferase of Photorhabdus laumondii subsp. laumondii (strain DSM 15139 / CIP 105565 / TT01) (Photorhabdus luminescens subsp. laumondii).